The following is a 576-amino-acid chain: Arginine--tRNA ligase (576 aa).

Residues 126–136 (ANPTGPMHIGH) carry the 'HIGH' region motif.

The protein belongs to the class-I aminoacyl-tRNA synthetase family. Monomer.

The protein resides in the cytoplasm. The catalysed reaction is tRNA(Arg) + L-arginine + ATP = L-arginyl-tRNA(Arg) + AMP + diphosphate. The polypeptide is Arginine--tRNA ligase (Rickettsia africae (strain ESF-5)).